Reading from the N-terminus, the 202-residue chain is Orotate phosphoribosyltransferase (202 aa).

Residues Lys93 and 113–121 (EDIITTGGS) contribute to the 5-phospho-alpha-D-ribose 1-diphosphate site. Orotate is bound by residues Thr117 and Arg145.

It belongs to the purine/pyrimidine phosphoribosyltransferase family. PyrE subfamily. In terms of assembly, homodimer. Requires Mg(2+) as cofactor.

The enzyme catalyses orotidine 5'-phosphate + diphosphate = orotate + 5-phospho-alpha-D-ribose 1-diphosphate. It participates in pyrimidine metabolism; UMP biosynthesis via de novo pathway; UMP from orotate: step 1/2. In terms of biological role, catalyzes the transfer of a ribosyl phosphate group from 5-phosphoribose 1-diphosphate to orotate, leading to the formation of orotidine monophosphate (OMP). This Campylobacter hominis (strain ATCC BAA-381 / DSM 21671 / CCUG 45161 / LMG 19568 / NCTC 13146 / CH001A) protein is Orotate phosphoribosyltransferase.